The chain runs to 266 residues: Carboxy-S-adenosyl-L-methionine synthase (266 aa).

A disordered region spans residues 1–24; sequence MPKRETQSLHDTQQQPGPTAPQRD. S-adenosyl-L-methionine-binding positions include tyrosine 58, 83–85, 108–109, 136–137, asparagine 151, and arginine 218; these read GCS, DN, and DI.

The protein belongs to the class I-like SAM-binding methyltransferase superfamily. Cx-SAM synthase family. In terms of assembly, homodimer.

The enzyme catalyses prephenate + S-adenosyl-L-methionine = carboxy-S-adenosyl-L-methionine + 3-phenylpyruvate + H2O. Catalyzes the conversion of S-adenosyl-L-methionine (SAM) to carboxy-S-adenosyl-L-methionine (Cx-SAM). In Yersinia enterocolitica serotype O:8 / biotype 1B (strain NCTC 13174 / 8081), this protein is Carboxy-S-adenosyl-L-methionine synthase.